The primary structure comprises 237 residues: UPF0174 protein YaaW (237 aa).

It belongs to the UPF0174 family.

The sequence is that of UPF0174 protein YaaW (yaaW) from Escherichia coli (strain K12).